The following is a 473-amino-acid chain: Photosystem II CP43 reaction center protein (473 aa).

Positions 1 to 14 (MKTLYSLRRFYPVE) are excised as a propeptide. T15 carries the N-acetylthreonine modification. Residue T15 is modified to Phosphothreonine. Transmembrane regions (helical) follow at residues 69-93 (LFEV…PHLA), 134-155 (LLGP…KDRN), 178-200 (KALY…RKIT), 255-275 (KPFA…LSYS), and 291-312 (WFNN…ASQA). E367 contacts [CaMn4O5] cluster. The chain crosses the membrane as a helical span at residues 447–471 (RARAAAAGFEKGIDRDLEPVLSMTP).

It belongs to the PsbB/PsbC family. PsbC subfamily. In terms of assembly, PSII is composed of 1 copy each of membrane proteins PsbA, PsbB, PsbC, PsbD, PsbE, PsbF, PsbH, PsbI, PsbJ, PsbK, PsbL, PsbM, PsbT, PsbX, PsbY, PsbZ, Psb30/Ycf12, at least 3 peripheral proteins of the oxygen-evolving complex and a large number of cofactors. It forms dimeric complexes. It depends on Binds multiple chlorophylls and provides some of the ligands for the Ca-4Mn-5O cluster of the oxygen-evolving complex. It may also provide a ligand for a Cl- that is required for oxygen evolution. PSII binds additional chlorophylls, carotenoids and specific lipids. as a cofactor.

It is found in the plastid. The protein resides in the chloroplast thylakoid membrane. Functionally, one of the components of the core complex of photosystem II (PSII). It binds chlorophyll and helps catalyze the primary light-induced photochemical processes of PSII. PSII is a light-driven water:plastoquinone oxidoreductase, using light energy to abstract electrons from H(2)O, generating O(2) and a proton gradient subsequently used for ATP formation. The sequence is that of Photosystem II CP43 reaction center protein from Phalaenopsis aphrodite subsp. formosana (Moth orchid).